We begin with the raw amino-acid sequence, 360 residues long: NAD(P)H-quinone oxidoreductase subunit 1, chloroplastic (360 aa).

The next 8 helical transmembrane spans lie at 27–47 (IWIF…VLVI), 98–118 (FSIG…IIPF), 129–149 (IGIF…LMSG), 165–185 (AAQS…ISLL), 203–223 (FWGW…ISSL), 253–273 (FGLF…FVTV), 297–317 (IFGT…FLFI), and 340–360 (FLLP…LFSL).

It belongs to the complex I subunit 1 family. As to quaternary structure, NDH is composed of at least 16 different subunits, 5 of which are encoded in the nucleus.

The protein resides in the plastid. The protein localises to the chloroplast thylakoid membrane. The enzyme catalyses a plastoquinone + NADH + (n+1) H(+)(in) = a plastoquinol + NAD(+) + n H(+)(out). The catalysed reaction is a plastoquinone + NADPH + (n+1) H(+)(in) = a plastoquinol + NADP(+) + n H(+)(out). In terms of biological role, NDH shuttles electrons from NAD(P)H:plastoquinone, via FMN and iron-sulfur (Fe-S) centers, to quinones in the photosynthetic chain and possibly in a chloroplast respiratory chain. The immediate electron acceptor for the enzyme in this species is believed to be plastoquinone. Couples the redox reaction to proton translocation, and thus conserves the redox energy in a proton gradient. This chain is NAD(P)H-quinone oxidoreductase subunit 1, chloroplastic, found in Lobularia maritima (Sweet alyssum).